The following is a 452-amino-acid chain: Trigger factor (452 aa).

The PPIase FKBP-type domain occupies 171 to 256 (GDRVTISFKG…ATKVEAPQDT (86 aa)).

It belongs to the FKBP-type PPIase family. Tig subfamily.

It is found in the cytoplasm. It catalyses the reaction [protein]-peptidylproline (omega=180) = [protein]-peptidylproline (omega=0). Involved in protein export. Acts as a chaperone by maintaining the newly synthesized protein in an open conformation. Functions as a peptidyl-prolyl cis-trans isomerase. The chain is Trigger factor from Rhodopseudomonas palustris (strain HaA2).